We begin with the raw amino-acid sequence, 1123 residues long: Ubiquitin carboxyl-terminal hydrolase 43 (1123 aa).

Positions 1-102 (MDLGPGDAAG…DGARPPGAQG (102 aa)) are disordered. Over residues 17 to 28 (RPRRRRSLRRLF) the composition is skewed to basic residues. Low complexity predominate over residues 29-39 (SRFLLALGSRS). The region spanning 101 to 710 (QGLKNHGNTC…GAYILFYQKR (610 aa)) is the USP domain. Cysteine 110 functions as the Nucleophile in the catalytic mechanism. Residues 202–221 (EGSSRGPVSEKLPPEATKTS) form a disordered region. Histidine 668 functions as the Proton acceptor in the catalytic mechanism. Asymmetric dimethylarginine is present on arginine 746. 4 disordered regions span residues 795-826 (ISMKAPTTSRAKQGPFKTMPLRWSFGSKEKPP), 854-886 (TGTAGEDEKSASPRSNVALPANSEDGGRAIERG), 959-1049 (FQMG…RIPE), and 1068-1099 (SSLRLPRKASRAPRGSALGMSQRTVPGEQASY). Phosphoserine is present on serine 969. Residues 979 to 990 (KDSRRGTSELDR) show a composition bias toward basic and acidic residues. Positions 1016–1027 (VSPQVPPVSLVS) are enriched in low complexity. Serine 1041 bears the Phosphoserine mark.

This sequence belongs to the peptidase C19 family. Expressed in brain, aorta and lung at low levels.

It carries out the reaction Thiol-dependent hydrolysis of ester, thioester, amide, peptide and isopeptide bonds formed by the C-terminal Gly of ubiquitin (a 76-residue protein attached to proteins as an intracellular targeting signal).. Its function is as follows. May recognize and hydrolyze the peptide bond at the C-terminal Gly of ubiquitin. Involved in the processing of poly-ubiquitin precursors as well as that of ubiquitinated proteins. In Homo sapiens (Human), this protein is Ubiquitin carboxyl-terminal hydrolase 43 (USP43).